The primary structure comprises 169 residues: uncharacterized protein (169 aa).

Residues 18-130 (VVEHCLAVSE…VAHADNLIFG (113 aa)) enclose the HD domain.

This is an uncharacterized protein from Methanocaldococcus jannaschii (strain ATCC 43067 / DSM 2661 / JAL-1 / JCM 10045 / NBRC 100440) (Methanococcus jannaschii).